Consider the following 797-residue polypeptide: Complex I intermediate-associated protein 84, mitochondrial (797 aa).

Residues 1 to 69 (MRSHLARNAT…ALCTRTSKRT (69 aa)) constitute a mitochondrion transit peptide.

It localises to the mitochondrion. Chaperone protein involved in the assembly of the mitochondrial NADH:ubiquinone oxidoreductase complex (complex I). The sequence is that of Complex I intermediate-associated protein 84, mitochondrial (cia84) from Neurospora crassa (strain ATCC 24698 / 74-OR23-1A / CBS 708.71 / DSM 1257 / FGSC 987).